The primary structure comprises 452 residues: BUB3-interacting and GLEBS motif-containing protein ZNF207 (452 aa).

Residues 1–92 form a microtubule-binding region region; sequence MGRKKKKQLK…EGIPEKDMEE (92 aa). C2H2-type zinc fingers lie at residues 11–34 and 35–58; these read PWCWYCNRDFDDEKILIQHQKAKH and FKCHICHKKLYTGPGLAIHCMQVH. 2 disordered regions span residues 99-131 and 298-330; these read QKTQVDGQKKKTNQDDSDYDDDDDTAPSTSFQQ and STMSTTSTTNSTASKPSTSITSKPATLTTTSAT. Residues 113–123 are compositionally biased toward acidic residues; sequence DDSDYDDDDDT. Residues 329-361 form a GLEBS region; the sequence is ATSKLVHPDEDISLEEKRAQLPKYQRNLPRPGQ.

As to quaternary structure, interacts (via GLEBS region) with bub3.

Its subcellular location is the nucleus. It localises to the chromosome. It is found in the centromere. The protein localises to the kinetochore. The protein resides in the cytoplasm. Its subcellular location is the cytoskeleton. It localises to the spindle. In terms of biological role, kinetochore- and microtubule-binding protein that plays a key role in spindle assembly. Znf207/BuGZ is mainly composed of disordered low-complexity regions and undergoes phase transition or coacervation to form temperature-dependent liquid droplets. Coacervation promotes microtubule bundling and concentrates tubulin, promoting microtubule polymerization and assembly of spindle and spindle matrix by concentrating its building blocks. This chain is BUB3-interacting and GLEBS motif-containing protein ZNF207, found in Xenopus laevis (African clawed frog).